Here is a 274-residue protein sequence, read N- to C-terminus: Phloretin hydrolase (274 aa).

Zn(2+) is bound by residues His123, Glu154, His251, and Glu255.

This sequence belongs to the DAPG/phloretin hydrolase family. As to quaternary structure, homodimer. Zn(2+) serves as cofactor.

It localises to the cytoplasm. It catalyses the reaction phloretin + H2O = phloretate + 1,3,5-trihydroxybenzene + H(+). In terms of biological role, catalyzes the hydrolytic C-C cleavage of phloretin to phloroglucinol and 3-(4-hydroxyphenyl)propionic acid during flavonoid degradation. Also hydrolyzes other C-acylated phenols. In Eubacterium ramulus, this protein is Phloretin hydrolase (phy).